The sequence spans 464 residues: 3-isopropylmalate dehydratase large subunit (464 aa).

Residues Cys337, Cys397, and Cys400 each coordinate [4Fe-4S] cluster.

The protein belongs to the aconitase/IPM isomerase family. LeuC type 1 subfamily. As to quaternary structure, heterodimer of LeuC and LeuD. [4Fe-4S] cluster is required as a cofactor.

It carries out the reaction (2R,3S)-3-isopropylmalate = (2S)-2-isopropylmalate. Its pathway is amino-acid biosynthesis; L-leucine biosynthesis; L-leucine from 3-methyl-2-oxobutanoate: step 2/4. In terms of biological role, catalyzes the isomerization between 2-isopropylmalate and 3-isopropylmalate, via the formation of 2-isopropylmaleate. In Bacillus cereus (strain B4264), this protein is 3-isopropylmalate dehydratase large subunit.